The primary structure comprises 209 residues: CAAX box protein 1 (209 aa).

The segment at 182 to 209 (TAGRPPRDLSPSARPISSPPPETSCVLA) is disordered. A Cysteine methyl ester modification is found at C206. C206 carries the S-farnesyl cysteine lipid modification. The propeptide at 207–209 (VLA) is removed in mature form.

In terms of tissue distribution, ubiquitous.

The protein resides in the cell membrane. In Homo sapiens (Human), this protein is CAAX box protein 1.